Here is a 624-residue protein sequence, read N- to C-terminus: Vitamin B12 transporter BtuB (624 aa).

A signal peptide spans 1 to 21; it reads MTIKKYTLLTALSVTAFSGWA. The short motif at 31 to 38 is the TonB box element; it reads NEMVVTAN. Positions 43–157 constitute a TBDR plug domain; that stretch reads PKSSVLAPVD…IGGVVNIITE (115 aa). Cyanocob(III)alamin contacts are provided by residues Leu88, Ser90, Asn97, and 115–116; that span reads IS. The 465-residue stretch at 160-624 folds into the TBDR beta-barrel domain; sequence TLGSTLTAGL…EYYFTGSYNF (465 aa). The next 3 beta stranded transmembrane spans lie at 163–170, 174–183, and 189–200; these read STLTAGLG, YQNYNGSTQQ, and TTITLAGNYDYS. The Ca(2+) site is built by Asp204, Gln216, Asp218, and Asp220. 2 beta stranded membrane-spanning segments follow: residues 222–232 and 237–253; these read YLGKMLWLGAN and EQFS…NRSD. Residues Tyr254, Asp255, and Asp266 each contribute to the Ca(2+) site. A run of 17 beta stranded transmembrane segments spans residues 268–282, 284–301, 314–330, 333–342, 358–374, 376–386, 390–405, 408–422, 440–449, 455–464, 481–498, 502–517, 525–537, 543–557, 568–582, 595–606, and 612–624; these read RSLS…INFS, GGYA…QDYN, TLDD…NTYQ, LGNVGGGLDW, YEQR…QFVG, VTLEGAIRGDD, FGWH…WEFV, YRLI…KAPN, ESTQWEAAIT, LDWRLSAYRN, YYNV…TGSF, PLSH…PRNA, RRAK…QLDW, DWSV…RYDS, PVKL…LAVS, IANLFDKDYEMV, and PGRE…SYNF. Thr314 contacts cyanocob(III)alamin. Cyanocob(III)alamin is bound at residue Arg525. The short motif at 607–624 is the TonB C-terminal box element; the sequence is YGYQTPGREYYFTGSYNF.

The protein belongs to the TonB-dependent receptor family. BtuB (TC 1.B.14.3.1) subfamily.

It is found in the cell outer membrane. Involved in the active translocation of vitamin B12 (cyanocobalamin) across the outer membrane to the periplasmic space. It derives its energy for transport by interacting with the trans-periplasmic membrane protein TonB. This is Vitamin B12 transporter BtuB from Yersinia pseudotuberculosis serotype O:1b (strain IP 31758).